A 98-amino-acid polypeptide reads, in one-letter code: Trp operon repressor homolog (98 aa).

A DNA-binding region spans residues 59-82 (QRQVSQMLGVGVATITRGSNELKA).

Belongs to the TrpR family. As to quaternary structure, homodimer.

The protein localises to the cytoplasm. Its function is as follows. This protein is an aporepressor. When complexed with L-tryptophan it binds the operator region of the trp operon and prevents the initiation of transcription. This is Trp operon repressor homolog from Vibrio atlanticus (strain LGP32) (Vibrio splendidus (strain Mel32)).